The sequence spans 576 residues: MAGUK p55 subfamily member 7 (576 aa).

2 consecutive L27 domains span residues 10 to 63 (SDTG…YEKE) and 65 to 122 (PMPV…YDPV). Positions 139–220 (IIRLVKNREP…AITFKIIPSI (82 aa)) constitute a PDZ domain. The region spanning 228-298 (DGKMFVKALF…PSKQFQERRF (71 aa)) is the SH3 domain. The region spanning 368-560 (YRLVILVGPV…AYNELRSTLE (193 aa)) is the Guanylate kinase-like domain.

The protein belongs to the MAGUK family.

The protein resides in the membrane. It is found in the cell junction. The protein localises to the tight junction. It localises to the adherens junction. Acts as an important adapter that promotes epithelial cell polarity and tight junction formation. Involved in the assembly of protein complexes at sites of cell-cell contact. The protein is MAGUK p55 subfamily member 7 (mpp7) of Xenopus tropicalis (Western clawed frog).